The chain runs to 107 residues: Nucleoid-associated protein MCA1327 (107 aa).

It belongs to the YbaB/EbfC family. In terms of assembly, homodimer.

The protein localises to the cytoplasm. The protein resides in the nucleoid. In terms of biological role, binds to DNA and alters its conformation. May be involved in regulation of gene expression, nucleoid organization and DNA protection. The chain is Nucleoid-associated protein MCA1327 from Methylococcus capsulatus (strain ATCC 33009 / NCIMB 11132 / Bath).